A 381-amino-acid polypeptide reads, in one-letter code: Alanine racemase, catabolic (381 aa).

Lys55 (proton acceptor; specific for D-alanine) is an active-site residue. Position 55 is an N6-(pyridoxal phosphate)lysine (Lys55). Arg154 lines the substrate pocket. Tyr276 serves as the catalytic Proton acceptor; specific for L-alanine. Position 322 (Met322) interacts with substrate.

The protein belongs to the alanine racemase family. Pyridoxal 5'-phosphate serves as cofactor.

It carries out the reaction L-alanine = D-alanine. Isomerizes L-alanine to D-alanine which is then oxidized to pyruvate by DadA. The sequence is that of Alanine racemase, catabolic (dadB) from Mesorhizobium japonicum (strain LMG 29417 / CECT 9101 / MAFF 303099) (Mesorhizobium loti (strain MAFF 303099)).